The primary structure comprises 223 residues: Adenylate kinase (223 aa).

10–15 contributes to the ATP binding site; it reads GSGKGT. Residues 30-59 form an NMP region; it reads ESGAIFREHIGGGTELGMKAKGYIDKGELV. Residues Ser31, Arg36, 57 to 59, 84 to 87, and Gln91 each bind AMP; these read ELV and GFPR. The interval 125 to 164 is LID; sequence GRRLCANDPNHPNNIFIDAIKPNGDKCRVCGGDLKTRSDD. Position 126 (Arg126) interacts with ATP. Arg161 and Arg173 together coordinate AMP. ATP is bound at residue Gly209.

Belongs to the adenylate kinase family. As to quaternary structure, monomer.

Its subcellular location is the cytoplasm. The enzyme catalyses AMP + ATP = 2 ADP. It functions in the pathway purine metabolism; AMP biosynthesis via salvage pathway; AMP from ADP: step 1/1. Catalyzes the reversible transfer of the terminal phosphate group between ATP and AMP. Plays an important role in cellular energy homeostasis and in adenine nucleotide metabolism. This is Adenylate kinase from Solidesulfovibrio magneticus (strain ATCC 700980 / DSM 13731 / RS-1) (Desulfovibrio magneticus).